We begin with the raw amino-acid sequence, 291 residues long: Glycolipid transfer protein domain-containing protein 2 (291 aa).

Asparagine 276 carries an N-linked (GlcNAc...) asparagine glycan.

Belongs to the GLTP family.

The sequence is that of Glycolipid transfer protein domain-containing protein 2 (GLTPD2) from Homo sapiens (Human).